Consider the following 80-residue polypeptide: Large ribosomal subunit protein uL24 (80 aa).

The tract at residues 53 to 80 (HMKPTQSHPQGSIIEREFPIHASNVKKS) is disordered.

It belongs to the universal ribosomal protein uL24 family. As to quaternary structure, part of the 50S ribosomal subunit.

One of two assembly initiator proteins, it binds directly to the 5'-end of the 23S rRNA, where it nucleates assembly of the 50S subunit. Functionally, one of the proteins that surrounds the polypeptide exit tunnel on the outside of the subunit. In Chlorobium limicola (strain DSM 245 / NBRC 103803 / 6330), this protein is Large ribosomal subunit protein uL24.